Here is a 330-residue protein sequence, read N- to C-terminus: Aspartate--ammonia ligase (330 aa).

Belongs to the class-II aminoacyl-tRNA synthetase family. AsnA subfamily.

It localises to the cytoplasm. The catalysed reaction is L-aspartate + NH4(+) + ATP = L-asparagine + AMP + diphosphate + H(+). It participates in amino-acid biosynthesis; L-asparagine biosynthesis; L-asparagine from L-aspartate (ammonia route): step 1/1. The protein is Aspartate--ammonia ligase of Streptococcus agalactiae serotype III (strain NEM316).